A 236-amino-acid polypeptide reads, in one-letter code: Cytochrome b-c1 complex subunit Rieske-4, mitochondrial (236 aa).

A mitochondrion-targeting transit peptide spans 1–24 (MINFGSCWGLASVTSNSFSIISGF). Topologically, residues 25 to 73 (SSNSVSHAHDMGLVPDLPPTVAAIKNPTSKIVYDEHNHERYPPGDPSKR) are mitochondrial matrix. A helical membrane pass occupies residues 74–96 (AFAYFVLTGGRFVYASLVRLLIL). Residues 97–236 (KFVLSMSASK…FLEENKLLIG (140 aa)) are Mitochondrial intermembrane-facing. Positions 146–234 (INLANSVDLG…YSFLEENKLL (89 aa)) constitute a Rieske domain. Positions 179, 181, 198, and 201 each coordinate [2Fe-2S] cluster. A disulfide bridge links Cys184 with Cys200.

The protein belongs to the Rieske iron-sulfur protein family. Component of the ubiquinol-cytochrome c oxidoreductase (cytochrome b-c1 complex, complex III, CIII), a multisubunit enzyme composed of 3 respiratory subunits cytochrome b, cytochrome c1 and Rieske protein, 2 core protein subunits, and several low-molecular weight protein subunits. The complex exists as an obligatory dimer and forms supercomplexes (SCs) in the inner mitochondrial membrane with cytochrome c oxidase (complex IV, CIV). [2Fe-2S] cluster is required as a cofactor.

It is found in the mitochondrion inner membrane. It carries out the reaction a quinol + 2 Fe(III)-[cytochrome c](out) = a quinone + 2 Fe(II)-[cytochrome c](out) + 2 H(+)(out). Its function is as follows. Component of the ubiquinol-cytochrome c oxidoreductase, a multisubunit transmembrane complex that is part of the mitochondrial electron transport chain which drives oxidative phosphorylation. The respiratory chain contains 3 multisubunit complexes succinate dehydrogenase (complex II, CII), ubiquinol-cytochrome c oxidoreductase (cytochrome b-c1 complex, complex III, CIII) and cytochrome c oxidase (complex IV, CIV), that cooperate to transfer electrons derived from NADH and succinate to molecular oxygen, creating an electrochemical gradient over the inner membrane that drives transmembrane transport and the ATP synthase. The cytochrome b-c1 complex catalyzes electron transfer from ubiquinol to cytochrome c, linking this redox reaction to translocation of protons across the mitochondrial inner membrane, with protons being carried across the membrane as hydrogens on the quinol. In the process called Q cycle, 2 protons are consumed from the matrix, 4 protons are released into the intermembrane space and 2 electrons are passed to cytochrome c. The Rieske protein is a catalytic core subunit containing a [2Fe-2S] iron-sulfur cluster. It cycles between 2 conformational states during catalysis to transfer electrons from the quinol bound in the Q(0) site in cytochrome b to cytochrome c1. This is Cytochrome b-c1 complex subunit Rieske-4, mitochondrial from Nicotiana tabacum (Common tobacco).